The sequence spans 245 residues: 1-(5-phosphoribosyl)-5-[(5-phosphoribosylamino)methylideneamino] imidazole-4-carboxamide isomerase (245 aa).

Residue D8 is the Proton acceptor of the active site. D131 acts as the Proton donor in catalysis.

It belongs to the HisA/HisF family.

The protein resides in the cytoplasm. The enzyme catalyses 1-(5-phospho-beta-D-ribosyl)-5-[(5-phospho-beta-D-ribosylamino)methylideneamino]imidazole-4-carboxamide = 5-[(5-phospho-1-deoxy-D-ribulos-1-ylimino)methylamino]-1-(5-phospho-beta-D-ribosyl)imidazole-4-carboxamide. It participates in amino-acid biosynthesis; L-histidine biosynthesis; L-histidine from 5-phospho-alpha-D-ribose 1-diphosphate: step 4/9. This Neisseria gonorrhoeae (strain NCCP11945) protein is 1-(5-phosphoribosyl)-5-[(5-phosphoribosylamino)methylideneamino] imidazole-4-carboxamide isomerase.